Reading from the N-terminus, the 211-residue chain is Ethylene-responsive transcription factor LEP (211 aa).

Disordered regions lie at residues 1 to 21 (MNTT…TRFL) and 74 to 110 (NFVY…NDPV). A DNA-binding region (AP2/ERF) is located at residues 19 to 76 (RFLGVRRRPWGRYAAEIRDPTTKERHWLGTFDTAEEAALAYDRAARSMRGTRARTNFV). The segment covering 81-92 (PPSSSVTSIVSP) has biased composition (low complexity). Residues 93-107 (DDPPPPPPPPAPPSN) are compositionally biased toward pro residues.

Belongs to the AP2/ERF transcription factor family. ERF subfamily. As to expression, expressed in germinating seeds. Present in young shoots, at low levels, especially in leaf primordia and developing leaf blades. Also detected in vascular tissue, mostly in xylem, of young leaves, petioles and hypocotyls.

It localises to the nucleus. Cell division-promoting factor involved in leaf blade differentiation, inflorescence branching, as well as in carpel and silique shape. Promotes the number of xylem cells. Positively regulates the gibberellin signaling pathway leading to germination, hypocotyl elongation, and leaf expansion. Probably acts as a transcriptional activator. Binds to the GCC-box pathogenesis-related promoter element. May be involved in the regulation of gene expression by stress factors and by components of stress signal transduction pathways. The chain is Ethylene-responsive transcription factor LEP (LEP) from Arabidopsis thaliana (Mouse-ear cress).